The primary structure comprises 872 residues: Alanine--tRNA ligase (872 aa).

Zn(2+) contacts are provided by His567, His571, Cys669, and His673.

Belongs to the class-II aminoacyl-tRNA synthetase family. Zn(2+) is required as a cofactor.

Its subcellular location is the cytoplasm. It carries out the reaction tRNA(Ala) + L-alanine + ATP = L-alanyl-tRNA(Ala) + AMP + diphosphate. Catalyzes the attachment of alanine to tRNA(Ala) in a two-step reaction: alanine is first activated by ATP to form Ala-AMP and then transferred to the acceptor end of tRNA(Ala). Also edits incorrectly charged Ser-tRNA(Ala) and Gly-tRNA(Ala) via its editing domain. This chain is Alanine--tRNA ligase, found in Streptococcus pyogenes serotype M6 (strain ATCC BAA-946 / MGAS10394).